An 88-amino-acid polypeptide reads, in one-letter code: MANIKSQIKRNKTNEKARLRNKAVKSSLKTAIRKAREAAAAGDVEKATEYQRAAARQLDKAVSKGVIHKNQAANKKSALASKVAPLKG.

Positions 1–28 are disordered; it reads MANIKSQIKRNKTNEKARLRNKAVKSSL.

Belongs to the bacterial ribosomal protein bS20 family.

Its function is as follows. Binds directly to 16S ribosomal RNA. This is Small ribosomal subunit protein bS20 from Streptomyces avermitilis (strain ATCC 31267 / DSM 46492 / JCM 5070 / NBRC 14893 / NCIMB 12804 / NRRL 8165 / MA-4680).